The chain runs to 807 residues: Microbial collagenase (807 aa).

A signal peptide spans Met1–Gly27. His434 lines the Zn(2+) pocket. Residue Glu435 is part of the active site. His438 contacts Zn(2+). Residues Glu562–Leu585 are disordered.

The protein belongs to the peptidase M9A family. Zn(2+) is required as a cofactor.

The protein resides in the secreted. The enzyme catalyses Digestion of native collagen in the triple helical region at Xaa-|-Gly bonds. With synthetic peptides, a preference is shown for Gly at P3 and P1', Pro and Ala at P2 and P2', and hydroxyproline, Ala or Arg at P3'.. In terms of biological role, possesses gelatinolytic activity. The polypeptide is Microbial collagenase (Vibrio vulnificus (strain CMCP6)).